The following is a 197-amino-acid chain: MAFRWRSLMRFRSTTRLLLLFTFCLTVIHSLGNDVDSCDKLHLGQYLCKEPRIDDATQEPETCKDRVAWVECLPAPNISCRLSNGTQFKFSGEEVGFNKTIPCRNVSGYSYKVAVALSLFLGWIGADRFYLGYPALGLLKFCTVGFCGIGSLVDFMLISMQIVGPSDGSDYIVDYYGARLTRLSITNETYRRMQPSP.

Residues 1–32 form the signal peptide; it reads MAFRWRSLMRFRSTTRLLLLFTFCLTVIHSLG. Over 33–105 the chain is Extracellular; sequence NDVDSCDKLH…GFNKTIPCRN (73 aa). N-linked (GlcNAc...) asparagine glycans are attached at residues Asn-77, Asn-84, Asn-98, and Asn-105. Residues 106–126 form a helical membrane-spanning segment; that stretch reads VSGYSYKVAVALSLFLGWIGA. One can recognise a TM2 domain in the interval 108–155; sequence GYSYKVAVALSLFLGWIGADRFYLGYPALGLLKFCTVGFCGIGSLVDF. The Cytoplasmic portion of the chain corresponds to 127–143; it reads DRFYLGYPALGLLKFCT. The chain crosses the membrane as a helical span at residues 144–164; the sequence is VGFCGIGSLVDFMLISMQIVG. Residues 165–197 lie on the Extracellular side of the membrane; that stretch reads PSDGSDYIVDYYGARLTRLSITNETYRRMQPSP. A glycan (N-linked (GlcNAc...) asparagine) is linked at Asn-187.

The protein belongs to the TM2 family.

It is found in the membrane. The chain is TM2 domain-containing protein 1 (tm2d1) from Danio rerio (Zebrafish).